The chain runs to 635 residues: Threonine--tRNA ligase (635 aa).

Residues 1-61 (MINISFPDGS…DNDCKLRILT (61 aa)) enclose the TGS domain. A catalytic region spans residues 242-533 (DHRKLGRELD…LIEEYAGRFP (292 aa)). Positions 333, 384, and 510 each coordinate Zn(2+).

The protein belongs to the class-II aminoacyl-tRNA synthetase family. In terms of assembly, homodimer. Zn(2+) serves as cofactor.

It localises to the cytoplasm. The enzyme catalyses tRNA(Thr) + L-threonine + ATP = L-threonyl-tRNA(Thr) + AMP + diphosphate + H(+). Its function is as follows. Catalyzes the attachment of threonine to tRNA(Thr) in a two-step reaction: L-threonine is first activated by ATP to form Thr-AMP and then transferred to the acceptor end of tRNA(Thr). Also edits incorrectly charged L-seryl-tRNA(Thr). This is Threonine--tRNA ligase from Rickettsia peacockii (strain Rustic).